Consider the following 307-residue polypeptide: Ribosomal protein L11 methyltransferase (307 aa).

Threonine 144, glycine 165, aspartate 187, and asparagine 235 together coordinate S-adenosyl-L-methionine.

The protein belongs to the methyltransferase superfamily. PrmA family.

The protein resides in the cytoplasm. It catalyses the reaction L-lysyl-[protein] + 3 S-adenosyl-L-methionine = N(6),N(6),N(6)-trimethyl-L-lysyl-[protein] + 3 S-adenosyl-L-homocysteine + 3 H(+). Methylates ribosomal protein L11. In Psychrobacter sp. (strain PRwf-1), this protein is Ribosomal protein L11 methyltransferase.